The primary structure comprises 370 residues: Holliday junction branch migration complex subunit RuvB (370 aa).

A large ATPase domain (RuvB-L) region spans residues 1 to 182 (MDERMMTSAK…FGVIHRLEYY (182 aa)). ATP is bound by residues Leu-21, Arg-22, Gly-63, Lys-66, Thr-67, Thr-68, 129 to 131 (EDF), Arg-172, Tyr-182, and Arg-219. Thr-67 contacts Mg(2+). A small ATPAse domain (RuvB-S) region spans residues 183 to 253 (RPDELEFIIL…VAREALRRLE (71 aa)). The interval 256–370 (PRGLDTTDQR…AEQAALSFDE (115 aa)) is head domain (RuvB-H). DNA contacts are provided by Arg-311 and Arg-316.

This sequence belongs to the RuvB family. Homohexamer. Forms an RuvA(8)-RuvB(12)-Holliday junction (HJ) complex. HJ DNA is sandwiched between 2 RuvA tetramers; dsDNA enters through RuvA and exits via RuvB. An RuvB hexamer assembles on each DNA strand where it exits the tetramer. Each RuvB hexamer is contacted by two RuvA subunits (via domain III) on 2 adjacent RuvB subunits; this complex drives branch migration. In the full resolvosome a probable DNA-RuvA(4)-RuvB(12)-RuvC(2) complex forms which resolves the HJ.

The protein localises to the cytoplasm. The enzyme catalyses ATP + H2O = ADP + phosphate + H(+). Functionally, the RuvA-RuvB-RuvC complex processes Holliday junction (HJ) DNA during genetic recombination and DNA repair, while the RuvA-RuvB complex plays an important role in the rescue of blocked DNA replication forks via replication fork reversal (RFR). RuvA specifically binds to HJ cruciform DNA, conferring on it an open structure. The RuvB hexamer acts as an ATP-dependent pump, pulling dsDNA into and through the RuvAB complex. RuvB forms 2 homohexamers on either side of HJ DNA bound by 1 or 2 RuvA tetramers; 4 subunits per hexamer contact DNA at a time. Coordinated motions by a converter formed by DNA-disengaged RuvB subunits stimulates ATP hydrolysis and nucleotide exchange. Immobilization of the converter enables RuvB to convert the ATP-contained energy into a lever motion, pulling 2 nucleotides of DNA out of the RuvA tetramer per ATP hydrolyzed, thus driving DNA branch migration. The RuvB motors rotate together with the DNA substrate, which together with the progressing nucleotide cycle form the mechanistic basis for DNA recombination by continuous HJ branch migration. Branch migration allows RuvC to scan DNA until it finds its consensus sequence, where it cleaves and resolves cruciform DNA. The polypeptide is Holliday junction branch migration complex subunit RuvB (Heliobacterium modesticaldum (strain ATCC 51547 / Ice1)).